A 404-amino-acid chain; its full sequence is Probable tRNA sulfurtransferase (404 aa).

In terms of domain architecture, THUMP spans 61–166; sequence EAVSERLKDV…SGYSYIMCDE (106 aa). ATP-binding positions include 184 to 185, 209 to 210, Arg266, Gly288, and Gln297; these read LL and HF.

It belongs to the ThiI family.

It localises to the cytoplasm. The enzyme catalyses [ThiI sulfur-carrier protein]-S-sulfanyl-L-cysteine + a uridine in tRNA + 2 reduced [2Fe-2S]-[ferredoxin] + ATP + H(+) = [ThiI sulfur-carrier protein]-L-cysteine + a 4-thiouridine in tRNA + 2 oxidized [2Fe-2S]-[ferredoxin] + AMP + diphosphate. The catalysed reaction is [ThiS sulfur-carrier protein]-C-terminal Gly-Gly-AMP + S-sulfanyl-L-cysteinyl-[cysteine desulfurase] + AH2 = [ThiS sulfur-carrier protein]-C-terminal-Gly-aminoethanethioate + L-cysteinyl-[cysteine desulfurase] + A + AMP + 2 H(+). It participates in cofactor biosynthesis; thiamine diphosphate biosynthesis. Its function is as follows. Catalyzes the ATP-dependent transfer of a sulfur to tRNA to produce 4-thiouridine in position 8 of tRNAs, which functions as a near-UV photosensor. Also catalyzes the transfer of sulfur to the sulfur carrier protein ThiS, forming ThiS-thiocarboxylate. This is a step in the synthesis of thiazole, in the thiamine biosynthesis pathway. The sulfur is donated as persulfide by IscS. This chain is Probable tRNA sulfurtransferase, found in Bacillus cereus (strain ZK / E33L).